Here is a 330-residue protein sequence, read N- to C-terminus: Ketol-acid reductoisomerase (NADP(+)) (330 aa).

Residues 2–182 form the KARI N-terminal Rossmann domain; that stretch reads VKIFYDKDVT…GLTKVGVIQT (181 aa). NADP(+) contacts are provided by residues 25 to 28, R48, S53, and 83 to 86; these read YGSQ and DEVQ. H108 is a catalytic residue. G134 is a binding site for NADP(+). The 146-residue stretch at 183–328 folds into the KARI C-terminal knotted domain; the sequence is TFREETETDL…KELRKMCGLE (146 aa). Residues D191, E195, E227, and E231 each coordinate Mg(2+). S252 contacts substrate.

This sequence belongs to the ketol-acid reductoisomerase family. It depends on Mg(2+) as a cofactor.

The enzyme catalyses (2R)-2,3-dihydroxy-3-methylbutanoate + NADP(+) = (2S)-2-acetolactate + NADPH + H(+). It carries out the reaction (2R,3R)-2,3-dihydroxy-3-methylpentanoate + NADP(+) = (S)-2-ethyl-2-hydroxy-3-oxobutanoate + NADPH + H(+). The protein operates within amino-acid biosynthesis; L-isoleucine biosynthesis; L-isoleucine from 2-oxobutanoate: step 2/4. It functions in the pathway amino-acid biosynthesis; L-valine biosynthesis; L-valine from pyruvate: step 2/4. Its function is as follows. Involved in the biosynthesis of branched-chain amino acids (BCAA). Catalyzes an alkyl-migration followed by a ketol-acid reduction of (S)-2-acetolactate (S2AL) to yield (R)-2,3-dihydroxy-isovalerate. In the isomerase reaction, S2AL is rearranged via a Mg-dependent methyl migration to produce 3-hydroxy-3-methyl-2-ketobutyrate (HMKB). In the reductase reaction, this 2-ketoacid undergoes a metal-dependent reduction by NADPH to yield (R)-2,3-dihydroxy-isovalerate. The protein is Ketol-acid reductoisomerase (NADP(+)) of Methanocaldococcus jannaschii (strain ATCC 43067 / DSM 2661 / JAL-1 / JCM 10045 / NBRC 100440) (Methanococcus jannaschii).